The primary structure comprises 229 residues: PKHD-type hydroxylase Rpal_3968 (229 aa).

The Fe2OG dioxygenase domain maps to 78-180; sequence QIFPPLFNRY…RVASFFWLQS (103 aa). Histidine 98, aspartate 100, and histidine 161 together coordinate Fe cation. Residue arginine 171 coordinates 2-oxoglutarate.

Requires Fe(2+) as cofactor. L-ascorbate serves as cofactor.

In Rhodopseudomonas palustris (strain TIE-1), this protein is PKHD-type hydroxylase Rpal_3968.